The following is a 426-amino-acid chain: Glutamate-1-semialdehyde 2,1-aminomutase (426 aa).

Lys265 carries the N6-(pyridoxal phosphate)lysine modification.

The protein belongs to the class-III pyridoxal-phosphate-dependent aminotransferase family. HemL subfamily. In terms of assembly, homodimer. Requires pyridoxal 5'-phosphate as cofactor.

Its subcellular location is the cytoplasm. It catalyses the reaction (S)-4-amino-5-oxopentanoate = 5-aminolevulinate. The protein operates within porphyrin-containing compound metabolism; protoporphyrin-IX biosynthesis; 5-aminolevulinate from L-glutamyl-tRNA(Glu): step 2/2. This chain is Glutamate-1-semialdehyde 2,1-aminomutase, found in Salmonella typhi.